A 664-amino-acid chain; its full sequence is Intraflagellar transport protein 70B (664 aa).

TPR repeat units lie at residues 11 to 44 (DGEF…SSRS), 45 to 78 (RAGL…HPEL), 153 to 186 (YDGQ…SGYQ), 188 to 220 (DLSY…GIRQ), 385 to 418 (LTEQ…YDET), 423 to 456 (IPVL…CNDH), and 458 to 491 (VWKL…NYDN). Positions 507–534 (YIMTSQNEEAEELMRKIEKEEEQLSYGD) form a coiled coil. A TPR 8 repeat occupies 543-576 (CIVNLVIGTLYCAKGNYDFGISRVIKSLEPYHKK).

Belongs to the TTC30/dfy-1/fleer family. Interacts with the IFT B complex components IFT27, IFT46, IFT74, IFT52, IFT57, IFT80, IFT81 and IFT88. Interacts with KIF17.

Its subcellular location is the cell projection. It localises to the cilium. Its function is as follows. Required for polyglutamylation of axonemal tubulin. Plays a role in anterograde intraflagellar transport (IFT), the process by which cilia precursors are transported from the base of the cilium to the site of their incorporation at the tip. The sequence is that of Intraflagellar transport protein 70B (Ift70b) from Mus musculus (Mouse).